A 271-amino-acid polypeptide reads, in one-letter code: 3-deoxy-manno-octulosonate cytidylyltransferase (271 aa).

The protein belongs to the KdsB family.

Its subcellular location is the cytoplasm. It catalyses the reaction 3-deoxy-alpha-D-manno-oct-2-ulosonate + CTP = CMP-3-deoxy-beta-D-manno-octulosonate + diphosphate. It functions in the pathway nucleotide-sugar biosynthesis; CMP-3-deoxy-D-manno-octulosonate biosynthesis; CMP-3-deoxy-D-manno-octulosonate from 3-deoxy-D-manno-octulosonate and CTP: step 1/1. Its pathway is bacterial outer membrane biogenesis; lipopolysaccharide biosynthesis. In terms of biological role, activates KDO (a required 8-carbon sugar) for incorporation into bacterial lipopolysaccharide in Gram-negative bacteria. This Leptothrix cholodnii (strain ATCC 51168 / LMG 8142 / SP-6) (Leptothrix discophora (strain SP-6)) protein is 3-deoxy-manno-octulosonate cytidylyltransferase.